The chain runs to 445 residues: Phosphoglucosamine mutase (445 aa).

Residue Ser-102 is the Phosphoserine intermediate of the active site. Ser-102, Asp-240, Asp-242, and Asp-244 together coordinate Mg(2+). Residue Ser-102 is modified to Phosphoserine.

Belongs to the phosphohexose mutase family. The cofactor is Mg(2+). In terms of processing, activated by phosphorylation.

It carries out the reaction alpha-D-glucosamine 1-phosphate = D-glucosamine 6-phosphate. Functionally, catalyzes the conversion of glucosamine-6-phosphate to glucosamine-1-phosphate. This Mycolicibacterium vanbaalenii (strain DSM 7251 / JCM 13017 / BCRC 16820 / KCTC 9966 / NRRL B-24157 / PYR-1) (Mycobacterium vanbaalenii) protein is Phosphoglucosamine mutase.